Consider the following 459-residue polypeptide: Putrescine aminotransferase (459 aa).

Pyridoxal 5'-phosphate is bound by residues 150-151 (GT) and glutamine 274. At lysine 300 the chain carries N6-(pyridoxal phosphate)lysine. Threonine 332 is a pyridoxal 5'-phosphate binding site.

Belongs to the class-III pyridoxal-phosphate-dependent aminotransferase family. Putrescine aminotransferase subfamily. The cofactor is pyridoxal 5'-phosphate.

The catalysed reaction is an alkane-alpha,omega-diamine + 2-oxoglutarate = an omega-aminoaldehyde + L-glutamate. It catalyses the reaction putrescine + 2-oxoglutarate = 1-pyrroline + L-glutamate + H2O. The enzyme catalyses cadaverine + 2-oxoglutarate = 5-aminopentanal + L-glutamate. It functions in the pathway amine and polyamine degradation; putrescine degradation; 4-aminobutanal from putrescine (transaminase route): step 1/1. Its function is as follows. Catalyzes the aminotransferase reaction from putrescine to 2-oxoglutarate, leading to glutamate and 4-aminobutanal, which spontaneously cyclizes to form 1-pyrroline. This is the first step in one of two pathways for putrescine degradation, where putrescine is converted into 4-aminobutanoate (gamma-aminobutyrate or GABA) via 4-aminobutanal. Also functions as a cadaverine transaminase in a a L-lysine degradation pathway to succinate that proceeds via cadaverine, glutarate and L-2-hydroxyglutarate. This chain is Putrescine aminotransferase, found in Escherichia coli O6:H1 (strain CFT073 / ATCC 700928 / UPEC).